Here is a 115-residue protein sequence, read N- to C-terminus: Holo-[acyl-carrier-protein] synthase (115 aa).

Residues Asp8 and Glu50 each contribute to the Mg(2+) site.

The protein belongs to the P-Pant transferase superfamily. AcpS family. Mg(2+) serves as cofactor.

Its subcellular location is the cytoplasm. It catalyses the reaction apo-[ACP] + CoA = holo-[ACP] + adenosine 3',5'-bisphosphate + H(+). In terms of biological role, transfers the 4'-phosphopantetheine moiety from coenzyme A to a Ser of acyl-carrier-protein. The chain is Holo-[acyl-carrier-protein] synthase from Cutibacterium acnes (strain DSM 16379 / KPA171202) (Propionibacterium acnes).